A 483-amino-acid chain; its full sequence is Glycogen synthase (483 aa).

Position 18 (K18) interacts with ADP-alpha-D-glucose.

This sequence belongs to the glycosyltransferase 1 family. Bacterial/plant glycogen synthase subfamily.

The enzyme catalyses [(1-&gt;4)-alpha-D-glucosyl](n) + ADP-alpha-D-glucose = [(1-&gt;4)-alpha-D-glucosyl](n+1) + ADP + H(+). It participates in glycan biosynthesis; glycogen biosynthesis. Functionally, synthesizes alpha-1,4-glucan chains using ADP-glucose. The protein is Glycogen synthase of Methylocella silvestris (strain DSM 15510 / CIP 108128 / LMG 27833 / NCIMB 13906 / BL2).